The chain runs to 304 residues: tRNA-5-methyluridine(54) 2-sulfurtransferase (304 aa).

Residues C3, C6, C22, and H25 each contribute to the Zn(2+) site. ATP-binding residues include A53 and I79. C131 and C134 together coordinate [4Fe-4S] cluster. Positions 138 and 157 each coordinate ATP. C224 lines the [4Fe-4S] cluster pocket. The Zn(2+) site is built by C274, C277, C286, and C289.

The protein belongs to the TtcA family. TtuA subfamily. In terms of assembly, homodimer. It depends on [4Fe-4S] cluster as a cofactor. The cofactor is Mg(2+).

The enzyme catalyses 5-methyluridine(54) in tRNA + hydrogen sulfide + ATP = 5-methyl-2-thiouridine(54) in tRNA + AMP + diphosphate. Its pathway is tRNA modification. Catalyzes the ATP-dependent 2-thiolation of 5-methyluridine residue at position 54 in the T loop of tRNAs, leading to 5-methyl-2-thiouridine (m(5)s(2)U or s(2)T). This modification allows thermal stabilization of tRNAs in thermophilic microorganisms, and is required for cell growth at high temperatures. Can use free sulfide as sulfur source in vitro. The sequence is that of tRNA-5-methyluridine(54) 2-sulfurtransferase from Thermotoga maritima (strain ATCC 43589 / DSM 3109 / JCM 10099 / NBRC 100826 / MSB8).